The following is a 650-amino-acid chain: Pentatricopeptide repeat-containing protein At2g41080 (650 aa).

PPR repeat units follow at residues 43–77, 78–112, 114–139, 140–174, 175–209, 210–240, 241–275, 276–310, 311–341, 342–372, 378–413, and 414–444; these read NTSL…GFSS, DKFI…NYMS, NILI…MPDR, KLTT…GFSP, DEYT…GLEL, DLVV…MPVR, NLVA…GCRP, NKIT…GASS, VVAV…REDE, DEVM…MAEQ, NEVA…GFKP, and GLKH…MPIK. The type E motif stretch occupies residues 449–524; it reads IWKTLLSACN…EAGISWFEHK (76 aa). Positions 525–555 are type E(+) motif; the sequence is GEVHQFKMGDRSQSKSKEIYSYLKELTLEMK. The type DYW motif stretch occupies residues 556 to 650; it reads LKGYKPDTAS…NGKCSCGDYW (95 aa).

It belongs to the PPR family. PCMP-H subfamily.

The chain is Pentatricopeptide repeat-containing protein At2g41080 (PCMP-H29) from Arabidopsis thaliana (Mouse-ear cress).